The chain runs to 137 residues: Cofilin (137 aa).

Positions 5–135 constitute an ADF-H domain; that stretch reads GVKVSPECLE…AYETVLEKVT (131 aa).

The protein belongs to the actin-binding proteins ADF family.

The protein resides in the cytoplasm. Its subcellular location is the cytoskeleton. The protein localises to the nucleus matrix. In terms of biological role, controls reversibly actin polymerization and depolymerization in a pH-sensitive manner. It has the ability to bind G- and F-actin in a 1:1 ratio of cofilin to actin. Binding to F-actin is regulated by tropomyosin. It is the major component of intranuclear and cytoplasmic actin rods. Required for accumulation of actin at the cell division site via depolymerizing actin at the cell ends. In association with myosin II has a role in the assembly of the contractile ring via severing actin filaments. Involved in the maintenance of the contractile ring once formed. In association with profilin and capping protein, has a role in the mitotic reorganization of the actin cytoskeleton. Severs actin filaments (F-actin). This Schizosaccharomyces pombe (strain 972 / ATCC 24843) (Fission yeast) protein is Cofilin (cof1).